Here is a 185-residue protein sequence, read N- to C-terminus: Thiol:disulfide interchange protein DsbE (185 aa).

The Cytoplasmic segment spans residues Met1–Asn4. The chain crosses the membrane as a helical span at residues Val5–Ala25. At Arg26–Gln185 the chain is on the periplasmic side. Positions Ala39–Asp177 constitute a Thioredoxin domain. An intrachain disulfide couples Cys80 to Cys83.

Belongs to the thioredoxin family. DsbE subfamily.

The protein resides in the cell inner membrane. In terms of biological role, involved in disulfide bond formation. Catalyzes a late, reductive step in the assembly of periplasmic c-type cytochromes, probably the reduction of disulfide bonds of the apocytochrome c to allow covalent linkage with the heme. Possible subunit of a heme lyase. This chain is Thiol:disulfide interchange protein DsbE (dsbE1), found in Salmonella typhimurium (strain LT2 / SGSC1412 / ATCC 700720).